The sequence spans 98 residues: NADH-ubiquinone oxidoreductase chain 4L (98 aa).

The next 3 membrane-spanning stretches (helical) occupy residues 1 to 21 (MPVIYINLIAAFFMAFMGLLI), 29 to 49 (SLLCLEGMMLSLFILNSTLAL), and 61 to 81 (IILLVFAACEAALGLSLLVMV).

The protein belongs to the complex I subunit 4L family. As to quaternary structure, core subunit of respiratory chain NADH dehydrogenase (Complex I) which is composed of 45 different subunits.

It localises to the mitochondrion inner membrane. It catalyses the reaction a ubiquinone + NADH + 5 H(+)(in) = a ubiquinol + NAD(+) + 4 H(+)(out). Core subunit of the mitochondrial membrane respiratory chain NADH dehydrogenase (Complex I) which catalyzes electron transfer from NADH through the respiratory chain, using ubiquinone as an electron acceptor. Part of the enzyme membrane arm which is embedded in the lipid bilayer and involved in proton translocation. The sequence is that of NADH-ubiquinone oxidoreductase chain 4L (MT-ND4L) from Echinops telfairi (Lesser hedgehog tenrec).